Reading from the N-terminus, the 298-residue chain is N-acetylmuramic acid 6-phosphate etherase (298 aa).

The 164-residue stretch at Ile55 to Lys218 folds into the SIS domain. The Proton donor role is filled by Glu83. The active site involves Glu114.

It belongs to the GCKR-like family. MurNAc-6-P etherase subfamily. As to quaternary structure, homodimer.

It carries out the reaction N-acetyl-D-muramate 6-phosphate + H2O = N-acetyl-D-glucosamine 6-phosphate + (R)-lactate. The protein operates within amino-sugar metabolism; 1,6-anhydro-N-acetylmuramate degradation. It participates in amino-sugar metabolism; N-acetylmuramate degradation. It functions in the pathway cell wall biogenesis; peptidoglycan recycling. Its function is as follows. Specifically catalyzes the cleavage of the D-lactyl ether substituent of MurNAc 6-phosphate, producing GlcNAc 6-phosphate and D-lactate. Together with AnmK, is also required for the utilization of anhydro-N-acetylmuramic acid (anhMurNAc) either imported from the medium or derived from its own cell wall murein, and thus plays a role in cell wall recycling. The sequence is that of N-acetylmuramic acid 6-phosphate etherase from Escherichia coli O127:H6 (strain E2348/69 / EPEC).